The primary structure comprises 125 residues: Small ribosomal subunit protein eS25 (125 aa).

Basic and acidic residues predominate over residues 1–23 (MPPKDDKKKKDAGKSAKKDKDPV). The interval 1–38 (MPPKDDKKKKDAGKSAKKDKDPVNKSGGKAKKKKWSKG) is disordered. Over residues 28–38 (GKAKKKKWSKG) the composition is skewed to basic residues. Lys-43 carries the post-translational modification N6-acetyllysine. Lys-52 is modified (N6-acetyllysine; alternate). Lys-52 is modified (N6-succinyllysine; alternate). 2 positions are modified to N6-acetyllysine: Lys-60 and Lys-66. Lys-94 is subject to N6-acetyllysine; alternate. The residue at position 94 (Lys-94) is an N6-succinyllysine; alternate.

The protein belongs to the eukaryotic ribosomal protein eS25 family. In terms of assembly, component of the small ribosomal subunit.

Its subcellular location is the cytoplasm. Functionally, component of the small ribosomal subunit. The ribosome is a large ribonucleoprotein complex responsible for the synthesis of proteins in the cell. The chain is Small ribosomal subunit protein eS25 (RPS25) from Homo sapiens (Human).